The following is a 302-amino-acid chain: Acetyl-coenzyme A carboxylase carboxyl transferase subunit beta (302 aa).

Residues 25-294 (VWTKCDSCGQ…PQEDIVTEAA (270 aa)) form the CoA carboxyltransferase N-terminal domain. Cys-29, Cys-32, Cys-48, and Cys-51 together coordinate Zn(2+). The C4-type zinc-finger motif lies at 29 to 51 (CDSCGQVLYRAELERNLEVCPKC).

It belongs to the AccD/PCCB family. As to quaternary structure, acetyl-CoA carboxylase is a heterohexamer composed of biotin carboxyl carrier protein (AccB), biotin carboxylase (AccC) and two subunits each of ACCase subunit alpha (AccA) and ACCase subunit beta (AccD). The cofactor is Zn(2+).

It localises to the cytoplasm. The catalysed reaction is N(6)-carboxybiotinyl-L-lysyl-[protein] + acetyl-CoA = N(6)-biotinyl-L-lysyl-[protein] + malonyl-CoA. It participates in lipid metabolism; malonyl-CoA biosynthesis; malonyl-CoA from acetyl-CoA: step 1/1. Component of the acetyl coenzyme A carboxylase (ACC) complex. Biotin carboxylase (BC) catalyzes the carboxylation of biotin on its carrier protein (BCCP) and then the CO(2) group is transferred by the transcarboxylase to acetyl-CoA to form malonyl-CoA. The polypeptide is Acetyl-coenzyme A carboxylase carboxyl transferase subunit beta (Erwinia tasmaniensis (strain DSM 17950 / CFBP 7177 / CIP 109463 / NCPPB 4357 / Et1/99)).